We begin with the raw amino-acid sequence, 824 residues long: Phenylalanine--tRNA ligase beta subunit (824 aa).

A tRNA-binding domain is found at 39–153 (SEQAKNVVIG…NIPPIGSNAV (115 aa)). A B5 domain is found at 414–507 (KKSISVNLRM…RLIGYDNFDS (94 aa)). Positions 485, 491, 494, and 495 each coordinate Mg(2+). Positions 730 to 823 (PTVPYMERDI…LKEKIKAELR (94 aa)) constitute an FDX-ACB domain.

This sequence belongs to the phenylalanyl-tRNA synthetase beta subunit family. Type 1 subfamily. In terms of assembly, tetramer of two alpha and two beta subunits. Requires Mg(2+) as cofactor.

It localises to the cytoplasm. The catalysed reaction is tRNA(Phe) + L-phenylalanine + ATP = L-phenylalanyl-tRNA(Phe) + AMP + diphosphate + H(+). This is Phenylalanine--tRNA ligase beta subunit from Prochlorococcus marinus (strain NATL2A).